The following is a 135-amino-acid chain: C-type Lectin CRL (135 aa).

4 disulfide bridges follow: C3-C14, C31-C131, C38-C133, and C106-C123. Positions M10–Q132 constitute a C-type lectin domain. 5 residues coordinate Ca(2+): Q96, D98, E104, N119, and D120. Positions Q96 to D98 match the Galactose-binding motif.

Belongs to the true venom lectin family. Homodimer; disulfide-linked. As to expression, expressed by the venom gland.

Its subcellular location is the secreted. Its function is as follows. Beta-galactoside and N-acetylgalactosamine (GalNAc) specific C-type lectin. The protein is C-type Lectin CRL of Crotalus ruber ruber (Red diamond rattlesnake).